A 538-amino-acid chain; its full sequence is L-aspartate oxidase (538 aa).

Residues 14–17, K36, 43–50, and D223 contribute to the FAD site; these read SGAA and STYWAQGG. Catalysis depends on R290, which acts as the Proton donor/acceptor. FAD is bound by residues E375 and 391–392; that span reads SL.

The protein belongs to the FAD-dependent oxidoreductase 2 family. NadB subfamily. FAD is required as a cofactor.

The protein resides in the cytoplasm. It carries out the reaction L-aspartate + O2 = iminosuccinate + H2O2. Its pathway is cofactor biosynthesis; NAD(+) biosynthesis; iminoaspartate from L-aspartate (oxidase route): step 1/1. Catalyzes the oxidation of L-aspartate to iminoaspartate, the first step in the de novo biosynthesis of NAD(+). The polypeptide is L-aspartate oxidase (nadB) (Pseudomonas aeruginosa (strain ATCC 15692 / DSM 22644 / CIP 104116 / JCM 14847 / LMG 12228 / 1C / PRS 101 / PAO1)).